A 453-amino-acid polypeptide reads, in one-letter code: uncharacterized protein (453 aa).

The region spanning 5–63 (LLKKNQSIELTIEDLTHDGSGVGKIDGYPFFIPNTLPGEKVTAKIIKLNKNYGFARMEN) is the TRAM domain. [4Fe-4S] cluster is bound by residues cysteine 76, cysteine 82, cysteine 85, and cysteine 162. Residues glutamine 285, tyrosine 314, glutamate 335, and aspartate 383 each coordinate S-adenosyl-L-methionine. Cysteine 410 acts as the Nucleophile in catalysis.

It belongs to the class I-like SAM-binding methyltransferase superfamily. RNA M5U methyltransferase family.

This is an uncharacterized protein from Listeria monocytogenes serovar 1/2a (strain ATCC BAA-679 / EGD-e).